A 360-amino-acid polypeptide reads, in one-letter code: MSYKENLNPSSYTSKFATPSSATAAQRVLRKEPYVSTFTTPSDNLLAQRAQLARITPSASSSVPGRVAVSMDASSQNTALAELPKRKFTIDDFDIGRPLGKGKFGNVYLARDKQNKFIMALKVLFKSQLEKEGVEHQLRREIEIQSHLRHPNILRMYNYFHDRKRIYLMLEFAPRGELYKELQKHGRFDEQRSATFMEELADALQYCHERKVIHRDIKPENLLMGYKGELKIADFGWSVHAPSLRRRTMCGTLDYLPPEMIEGKTHDEKVDLWCAGVLCFEFLVGMPPFDSPSHTETHRRIVNVDLKFPPFLSDGSKDLISKLLRYHPPQRLPLKGVMEHPWVKANSRRVLPPVFQSSSK.

The region spanning 93-343 (FDIGRPLGKG…LKGVMEHPWV (251 aa)) is the Protein kinase domain. ATP is bound by residues 99–107 (LGKGKFGNV) and Lys122. Asp216 acts as the Proton acceptor in catalysis.

The protein belongs to the protein kinase superfamily. Ser/Thr protein kinase family. Aurora subfamily. As to quaternary structure, component of the chromosomal passenger complex (CPC).

The protein localises to the nucleus. It is found in the chromosome. Its subcellular location is the centromere. The protein resides in the cytoplasm. It localises to the cytoskeleton. The protein localises to the spindle. It is found in the midbody. The enzyme catalyses L-seryl-[protein] + ATP = O-phospho-L-seryl-[protein] + ADP + H(+). The catalysed reaction is L-threonyl-[protein] + ATP = O-phospho-L-threonyl-[protein] + ADP + H(+). With respect to regulation, kinase activity is stimulated by cell-cycle specific phosphorylation. Functionally, serine/threonine-protein kinase component of the chromosomal passenger complex (CPC), a complex that acts as a key regulator of mitosis. The CPC complex has essential functions at the centromere in ensuring correct chromosome alignment and segregation and is required for chromatin-induced microtubule stabilization and spindle assembly. Involved in the bipolar attachment of spindle microtubules to kinetochores and is a key regulator for the onset of cytokinesis during mitosis. Required for central/midzone spindle assembly and cleavage furrow formation. Key component of the cytokinesis checkpoint, a process required to delay abscission to prevent both premature resolution of intercellular chromosome bridges and accumulation of DNA damage. Phosphorylates 'Ser-10' of histone H3 during mitosis. This Xenopus tropicalis (Western clawed frog) protein is Aurora kinase B.